Reading from the N-terminus, the 143-residue chain is Ribosome maturation factor RimP (143 aa).

It belongs to the RimP family.

The protein localises to the cytoplasm. Functionally, required for maturation of 30S ribosomal subunits. This Neisseria meningitidis serogroup C (strain 053442) protein is Ribosome maturation factor RimP.